Consider the following 296-residue polypeptide: MRGGSVFGRCVVVGGAGAVGRMFSHWLVRSGVAVTWLDVAGAGAADGVRVVAGDVRRPGPEAVAALAAADVVVLAVPEPVAWEAVEVLAGVMRPGAVLADTLSVKSRIAGRLREAAPGLQAVGLNPMFAPSLGLQGRPVAAVVVTDGPGVRALVELVAGWGARVVEMPARRHDELTAAQQAATHAAVLAFGLGLGELSVDVGALRDSAPPPHLAMLALLARIAGGTPEVYFDIQAANPGAPAARQALGRGLVRLGQAVERGDEETFAALFAELRGVLGEHGAELERLCARMFTALH.

One can recognise a Prephenate/arogenate dehydrogenase domain in the interval 9–288 (RCVVVGGAGA…EHGAELERLC (280 aa)).

Belongs to the prephenate/arogenate dehydrogenase family.

The catalysed reaction is 4-amino-4-deoxyprephenate + NAD(+) = 3-(4-aminophenyl)pyruvate + CO2 + NADH + H(+). Its pathway is antibiotic biosynthesis. In terms of biological role, involved in pristinamycin I biosynthesis. Probably catalyzes the formation of 3-(4-aminophenyl)pyruvate from 4-amino-4-deoxyprephenate. This chain is 4-amino-4-deoxyprephenate dehydrogenase, found in Streptomyces pristinaespiralis.